We begin with the raw amino-acid sequence, 331 residues long: Holliday junction branch migration complex subunit RuvB (331 aa).

Positions 1-182 are large ATPase domain (RuvB-L); it reads MDDRMVDQAL…FGVHLRLEYY (182 aa). ATP contacts are provided by residues Leu-21, Arg-22, Gly-63, Lys-66, Thr-67, Thr-68, 129–131, Arg-172, Tyr-182, and Arg-219; that span reads EDF. Thr-67 provides a ligand contact to Mg(2+). The interval 183–253 is small ATPAse domain (RuvB-S); the sequence is NENDLKEIII…TTKQALQLLQ (71 aa). Residues 256–331 are head domain (RuvB-H); that stretch reads AEGLDYIDHK…AYEHFKNFNK (76 aa). The DNA site is built by Arg-292, Arg-311, and Arg-316.

This sequence belongs to the RuvB family. As to quaternary structure, homohexamer. Forms an RuvA(8)-RuvB(12)-Holliday junction (HJ) complex. HJ DNA is sandwiched between 2 RuvA tetramers; dsDNA enters through RuvA and exits via RuvB. An RuvB hexamer assembles on each DNA strand where it exits the tetramer. Each RuvB hexamer is contacted by two RuvA subunits (via domain III) on 2 adjacent RuvB subunits; this complex drives branch migration. In the full resolvosome a probable DNA-RuvA(4)-RuvB(12)-RuvC(2) complex forms which resolves the HJ.

It is found in the cytoplasm. It carries out the reaction ATP + H2O = ADP + phosphate + H(+). Its function is as follows. The RuvA-RuvB-RuvC complex processes Holliday junction (HJ) DNA during genetic recombination and DNA repair, while the RuvA-RuvB complex plays an important role in the rescue of blocked DNA replication forks via replication fork reversal (RFR). RuvA specifically binds to HJ cruciform DNA, conferring on it an open structure. The RuvB hexamer acts as an ATP-dependent pump, pulling dsDNA into and through the RuvAB complex. RuvB forms 2 homohexamers on either side of HJ DNA bound by 1 or 2 RuvA tetramers; 4 subunits per hexamer contact DNA at a time. Coordinated motions by a converter formed by DNA-disengaged RuvB subunits stimulates ATP hydrolysis and nucleotide exchange. Immobilization of the converter enables RuvB to convert the ATP-contained energy into a lever motion, pulling 2 nucleotides of DNA out of the RuvA tetramer per ATP hydrolyzed, thus driving DNA branch migration. The RuvB motors rotate together with the DNA substrate, which together with the progressing nucleotide cycle form the mechanistic basis for DNA recombination by continuous HJ branch migration. Branch migration allows RuvC to scan DNA until it finds its consensus sequence, where it cleaves and resolves cruciform DNA. The protein is Holliday junction branch migration complex subunit RuvB of Staphylococcus haemolyticus (strain JCSC1435).